Reading from the N-terminus, the 294-residue chain is 4-hydroxy-tetrahydrodipicolinate synthase (294 aa).

Thr-45 provides a ligand contact to pyruvate. The active-site Proton donor/acceptor is the Tyr-133. The active-site Schiff-base intermediate with substrate is the Lys-162. Ile-204 contacts pyruvate.

Belongs to the DapA family. In terms of assembly, homotetramer; dimer of dimers.

It localises to the cytoplasm. It catalyses the reaction L-aspartate 4-semialdehyde + pyruvate = (2S,4S)-4-hydroxy-2,3,4,5-tetrahydrodipicolinate + H2O + H(+). Its pathway is amino-acid biosynthesis; L-lysine biosynthesis via DAP pathway; (S)-tetrahydrodipicolinate from L-aspartate: step 3/4. In terms of biological role, catalyzes the condensation of (S)-aspartate-beta-semialdehyde [(S)-ASA] and pyruvate to 4-hydroxy-tetrahydrodipicolinate (HTPA). This Bartonella henselae (strain ATCC 49882 / DSM 28221 / CCUG 30454 / Houston 1) (Rochalimaea henselae) protein is 4-hydroxy-tetrahydrodipicolinate synthase.